A 676-amino-acid polypeptide reads, in one-letter code: Beta-taxilin (676 aa).

Disordered regions lie at residues 1–55 and 71–131; these read MEND…DISE and AASL…EQKL. Composition is skewed to polar residues over residues 8–25 and 34–45; these read EKQQQVTTSPTQDNQGQS and QPLSPTNQTSAQ. Over residues 75–92 the composition is skewed to basic and acidic residues; that stretch reads VEKEGTTAETDKPEKEDV. The span at 93–105 shows a compositional bias: acidic residues; the sequence is GSMEDAECEDVNE. The span at 106-131 shows a compositional bias: basic and acidic residues; that stretch reads ESEKDKPAPGDASRAKEPSASKEQKL. The stretch at 157–461 forms a coiled coil; sequence EEKLDLLFKK…LYRKIKQAQL (305 aa). Positions 464-486 are disordered; that stretch reads EVNGNDILEEDDDANTNPSSSEQ.

The protein belongs to the taxilin family. In terms of tissue distribution, specifically expressed in skeletal and cardiac muscle.

The protein localises to the cytoplasm. Its function is as follows. Promotes neurite-outgrowth. May be involved in intracellular vesicle traffic. In Gallus gallus (Chicken), this protein is Beta-taxilin (TXLNB).